A 592-amino-acid polypeptide reads, in one-letter code: MSIQENVESPQYPGDDTRPTSKRELAGWYCYGWAAEVFVVCAMGSFLPITLEQMARDRGVLLSDKTTPCSATWRPPLPPPGSDAPVYLPQVSDGGQCIIYFLGAEINTASFALYTFSLSVLVQAVIIISMSGAADHGTYRKKLLIVFAFIGSIATMLFLVVVPKVYLLGGLLAIISNTCFGASFVLLNSFLPVLVRHHPSLKESEEVASPDDNVTGPRGDPLFSSTGDIDRTNVDDSTPLLGPNREAGKTSAATITSLELRLSTRISSYGIGIGYIGAVILQVISILVVVVVRPPTFSLRLVLFLIGLWWFVFTIPASLWLRTRPGPPLLDSGGKPLHSWTGYMVYAWKSLGKTVTRARQLKDIVIFLAAWFLLSDGIATVSGTAVLFAKTQLNMKPAALGLINVIVMLAGVFGAFSWSYISNFFNLRASQTIIACIILFELIPLYGLLGFIPAVQRVGLGLHQPWEMYPLGALYGLVMGGLSSYCRSFFGQLIPPGYEAAFYALYAITDKGSSIFGPAIVGAITDRYGEIRPAFVFLAVLIFVPLPLMLLVDVDRGKRDAVALGAELDGIPQGSEYGAISDDQTTEDPIEE.

A run of 4 helical transmembrane segments spans residues 31–51 (YGWA…PITL), 108–128 (TASF…VIII), 143–163 (LLIV…VVVP), and 167–187 (LLGG…FVLL). An N-linked (GlcNAc...) asparagine glycan is attached at Asn213. A run of 8 helical transmembrane segments spans residues 271-291 (IGIG…VVVV), 301-321 (LVLF…SLWL), 364-384 (IVIF…VSGT), 398-418 (AALG…AFSW), 433-453 (IIAC…GFIP), 468-490 (MYPL…RSFF), 502-524 (FYAL…VGAI), and 534-554 (AFVF…LVDV). The segment at 572–592 (PQGSEYGAISDDQTTEDPIEE) is disordered.

It belongs to the ATG22 family.

Its subcellular location is the vacuole membrane. Vacuolar effluxer which mediate the efflux of amino acids resulting from autophagic degradation. The release of autophagic amino acids allows the maintenance of protein synthesis and viability during nitrogen starvation. The protein is Autophagy-related protein 22-1 (atg22-1) of Penicillium rubens (strain ATCC 28089 / DSM 1075 / NRRL 1951 / Wisconsin 54-1255) (Penicillium chrysogenum).